A 592-amino-acid chain; its full sequence is Probable oxidoreductase EphD (592 aa).

The AB hydrolase-1 domain maps to 30–286 (PTVVLVHGFP…KAGHFSPMSH (257 aa)). Position 461 (Ser461) interacts with substrate. Tyr474 serves as the catalytic Proton acceptor.

Belongs to the short-chain dehydrogenases/reductases (SDR) family.

In Mycobacterium bovis (strain ATCC BAA-935 / AF2122/97), this protein is Probable oxidoreductase EphD (ephD).